A 197-amino-acid polypeptide reads, in one-letter code: CASP-like protein 0U1 (197 aa).

Over 1-13 the chain is Cytoplasmic; the sequence is MDDFDPTVTNSPK. A helical transmembrane segment spans residues 14-34; the sequence is FRLIAVQCLFSITAFAAMLSQ. The Extracellular segment spans residues 35 to 63; it reads RHGLAGPDEMTLEECGPQACGYQKFSNFK. Residues 64 to 84 form a helical membrane-spanning segment; the sequence is FLIAVCIIYAVFSLVVMAAYL. The Cytoplasmic portion of the chain corresponds to 85–99; that stretch reads LQRVPPPVTELTAYT. The helical transmembrane segment at 100-120 threads the bilayer; that stretch reads VMNVLLFAAFAMSATSCNITI. Over 121 to 135 the chain is Extracellular; sequence VDPVYPVCKRATSAK. A helical transmembrane segment spans residues 136-156; that stretch reads ASIAFAFFTWLAVCFSMLFTY. At 157 to 197 the chain is on the cytoplasmic side; the sequence is KEWRDVDYHVPGSGAYEFVPGVTSGSSRSSYPPQASSSSYA. The interval 178–197 is disordered; the sequence is VTSGSSRSSYPPQASSSSYA. The segment covering 180-197 has biased composition (low complexity); sequence SGSSRSSYPPQASSSSYA.

The protein belongs to the Casparian strip membrane proteins (CASP) family. As to quaternary structure, homodimer and heterodimers.

The protein localises to the cell membrane. This is CASP-like protein 0U1 from Micromonas commoda (strain RCC299 / NOUM17 / CCMP2709) (Picoplanktonic green alga).